The chain runs to 758 residues: Maturase-like protein 2 (758 aa).

The protein localises to the plastid. It is found in the chloroplast. The sequence is that of Maturase-like protein 2 (mat2) from Euglena gracilis.